The sequence spans 642 residues: Frizzled-1 (642 aa).

An N-terminal signal peptide occupies residues 1-68; that stretch reads MAEEAAPSES…WLLEAPLLLG (68 aa). 2 disordered regions span residues 26-45 and 76-99; these read PGRR…RPRA and QVSG…QYNG. The Extracellular portion of the chain corresponds to 69 to 317; it reads VRAQAAGQVS…PEELRFSRTW (249 aa). The FZ domain occupies 106–225; sequence PDHGYCQPIS…HGAGELCVGQ (120 aa). 5 disulfides stabilise this stretch: cysteine 111–cysteine 172, cysteine 119–cysteine 165, cysteine 156–cysteine 193, cysteine 182–cysteine 222, and cysteine 186–cysteine 210. An N-linked (GlcNAc...) asparagine glycan is attached at asparagine 125. Asparagine 226 carries N-linked (GlcNAc...) asparagine glycosylation. The helical transmembrane segment at 318-338 threads the bilayer; the sequence is IGIWSVLCCASTLFTVLTYLV. Over 339–349 the chain is Cytoplasmic; the sequence is DMRRFSYPERP. Residues 350–370 traverse the membrane as a helical segment; it reads IIFLSGCYTAVAVAYIAGFLL. Residues 371–397 lie on the Extracellular side of the membrane; sequence EDRVVCNDKFAEDGARTVAQGTKKEGC. Residues 398–418 traverse the membrane as a helical segment; the sequence is TILFMMLYFFSMASSIWWVIL. Topologically, residues 419–440 are cytoplasmic; that stretch reads SLTWFLAAGMKWGHEAIEANSQ. The chain crosses the membrane as a helical span at residues 441–461; sequence YFHLAAWAVPAIKTITILALG. The Extracellular segment spans residues 462–484; the sequence is QVDGDVLSGVCFVGLNNVDALRG. Residues 485–505 traverse the membrane as a helical segment; sequence FVLAPLFVYLFIGTSFLLAGF. The Cytoplasmic portion of the chain corresponds to 506-531; the sequence is VSLFRIRTIMKHDGTKTEKLEKLMVR. The helical transmembrane segment at 532–552 threads the bilayer; that stretch reads IGVFSVLYTVPATIVIACYFY. Over 553–593 the chain is Extracellular; the sequence is EQAFRDQWERSWVAQSCKSYAIPCPHLQGGGGVPPHPPMSP. A helical membrane pass occupies residues 594 to 614; it reads DFTVFMIKYLMTLIVGITSGF. Residues 615–642 lie on the Cytoplasmic side of the membrane; that stretch reads WIWSGKTLNSWRKFYTRLTNSKQGETTV. The Lys-Thr-X-X-X-Trp motif, mediates interaction with the PDZ domain of Dvl family members motif lies at 620–625; that stretch reads KTLNSW. Positions 640 to 642 match the PDZ-binding motif; sequence TTV.

This sequence belongs to the G-protein coupled receptor Fz/Smo family. In terms of assembly, interacts with MYOC. Interacts with WNT7B. Post-translationally, ubiquitinated by ZNRF3, leading to its degradation by the proteasome. As to expression, expressed in chondrocytes.

Its subcellular location is the cell membrane. In terms of biological role, receptor for Wnt proteins. Activated by WNT7B. Activated by WNT3A, WNT3, WNT1 and to a lesser extent WNT2, but apparently not by WNT4, WNT5A, WNT5B, WNT6, WNT7A or WNT7B. Contradictory results showing activation by WNT7B have been described for mouse. Functions in the canonical Wnt/beta-catenin signaling pathway. The canonical Wnt/beta-catenin signaling pathway leads to the activation of disheveled proteins, inhibition of GSK-3 kinase, nuclear accumulation of beta-catenin and activation of Wnt target genes. A second signaling pathway involving PKC and calcium fluxes has been seen for some family members, but it is not yet clear if it represents a distinct pathway or if it can be integrated in the canonical pathway, as PKC seems to be required for Wnt-mediated inactivation of GSK-3 kinase. Both pathways seem to involve interactions with G-proteins. May be involved in transduction and intercellular transmission of polarity information during tissue morphogenesis and/or in differentiated tissues. The chain is Frizzled-1 (Fzd1) from Mus musculus (Mouse).